A 499-amino-acid chain; its full sequence is 2,3-bisphosphoglycerate-independent phosphoglycerate mutase (499 aa).

The Mn(2+) site is built by aspartate 10 and serine 60. Serine 60 serves as the catalytic Phosphoserine intermediate. Residues histidine 121, 151 to 152 (RD), arginine 182, arginine 188, 253 to 256 (RPDR), and lysine 326 contribute to the substrate site. Residues aspartate 391, histidine 395, aspartate 434, histidine 435, and histidine 452 each contribute to the Mn(2+) site.

This sequence belongs to the BPG-independent phosphoglycerate mutase family. As to quaternary structure, monomer. Mn(2+) is required as a cofactor.

It carries out the reaction (2R)-2-phosphoglycerate = (2R)-3-phosphoglycerate. It participates in carbohydrate degradation; glycolysis; pyruvate from D-glyceraldehyde 3-phosphate: step 3/5. Functionally, catalyzes the interconversion of 2-phosphoglycerate and 3-phosphoglycerate. The protein is 2,3-bisphosphoglycerate-independent phosphoglycerate mutase of Metamycoplasma hominis (strain ATCC 23114 / DSM 25592 / NBRC 14850 / NCTC 10111 / PG21) (Mycoplasma hominis).